Consider the following 151-residue polypeptide: Large ribosomal subunit protein bL9 (151 aa).

Belongs to the bacterial ribosomal protein bL9 family.

In terms of biological role, binds to the 23S rRNA. This Mycobacteroides abscessus (strain ATCC 19977 / DSM 44196 / CCUG 20993 / CIP 104536 / JCM 13569 / NCTC 13031 / TMC 1543 / L948) (Mycobacterium abscessus) protein is Large ribosomal subunit protein bL9.